Consider the following 179-residue polypeptide: NADH:FAD oxidoreductase (179 aa).

48–51 serves as a coordination point for FAD; it reads TCSA. 54 to 57 provides a ligand contact to NAD(+); the sequence is SVCD. Residues 65-71, Ala99, 104-109, and Ser144 contribute to the FAD site; these read CINRKSY and VPMEER. Residues His145 and 166–169 contribute to the NAD(+) site; that span reads YHRR. Tyr166 contributes to the FAD binding site.

The protein belongs to the non-flavoprotein flavin reductase family. In terms of assembly, homodimer. The chlorophenol-4-monooxygenase is composed of an oxygenase component TftD and a reductase component TftC.

It catalyses the reaction FADH2 + NAD(+) = FAD + NADH + 2 H(+). The protein operates within xenobiotic degradation. Its function is as follows. Reductase component of a two-component system that degrades 2,4,5-trichlorophenol. TftC provides the FADH(2) required by TftD. TftD oxidizes 2,4,5-trichlorophenol (2,4,5-TCP) to 2,5-dichloro-p-benzoquinone, which is chemically reduced to 2,5-dichloro-p-hydroquinone (2,5-DiCHQ). Then, TftD oxidizes the latter to 5-chloro-2-hydroxy-p-benzoquinone. This Burkholderia cepacia (Pseudomonas cepacia) protein is NADH:FAD oxidoreductase (tftC).